The following is a 76-amino-acid chain: UPF0248 protein MmarC6_0667 (76 aa).

Belongs to the UPF0248 family.

The polypeptide is UPF0248 protein MmarC6_0667 (Methanococcus maripaludis (strain C6 / ATCC BAA-1332)).